The chain runs to 304 residues: Putative dihydroorotate dehydrogenase A (fumarate) (304 aa).

FMN-binding positions include Ser21 and 45-46 (KS). Residues Lys45, 69 to 73 (NAVGL), and Asn129 contribute to the substrate site. Asn129 contacts FMN. Cys132 (nucleophile) is an active-site residue. Residues Lys168 and Ile194 each coordinate FMN. Residue 195-196 (NT) participates in substrate binding. FMN is bound by residues Gly220, 246–247 (GG), and 268–269 (GS).

This sequence belongs to the dihydroorotate dehydrogenase family. Type 1 subfamily. In terms of assembly, homodimer. FMN is required as a cofactor.

It localises to the cytoplasm. It carries out the reaction (S)-dihydroorotate + fumarate = orotate + succinate. The protein operates within pyrimidine metabolism; UMP biosynthesis via de novo pathway. Its function is as follows. Catalyzes the conversion of dihydroorotate to orotate with fumarate as the electron acceptor. In Pediococcus pentosaceus (strain ATCC 25745 / CCUG 21536 / LMG 10740 / 183-1w), this protein is Putative dihydroorotate dehydrogenase A (fumarate) (pyrD).